The following is a 510-amino-acid chain: Mitogen-activated protein kinase 9 (510 aa).

The Protein kinase domain maps to 23-314 (YQIQEVIGKG…AEEALADPYF (292 aa)). ATP-binding positions include 29–37 (IGKGSYGVV) and K52. The Proton acceptor role is filled by D149. T185 is subject to Phosphothreonine. Positions 185–187 (TDY) match the TXY motif. A Phosphotyrosine modification is found at Y187. A Phosphothreonine modification is found at T190. The disordered stretch occupies residues 393–461 (NYGKGEKGSP…SDYRNGTSQT (69 aa)). Over residues 410-431 (LPRERVPAPKKENGSHNHDIEN) the composition is skewed to basic and acidic residues. Residues 433-461 (SIASLVTTLESPPTSQHEGSDYRNGTSQT) are compositionally biased toward polar residues.

Belongs to the protein kinase superfamily. CMGC Ser/Thr protein kinase family. MAP kinase subfamily. Post-translationally, dually phosphorylated on Thr-185 and Tyr-187, which activates the enzyme.

It catalyses the reaction L-seryl-[protein] + ATP = O-phospho-L-seryl-[protein] + ADP + H(+). The enzyme catalyses L-threonyl-[protein] + ATP = O-phospho-L-threonyl-[protein] + ADP + H(+). Its activity is regulated as follows. Activated by threonine and tyrosine phosphorylation. The protein is Mitogen-activated protein kinase 9 (MPK9) of Arabidopsis thaliana (Mouse-ear cress).